The sequence spans 216 residues: Protein ADP-ribose pyrophosphatase ORF38 (216 aa).

One can recognise a Nudix hydrolase domain in the interval 1–177; sequence MRNAAGLFMI…DYSNYIEFFD (177 aa). Residues 48 to 70 carry the Nudix box motif; the sequence is GHRDCCDAKVYETAVREFVEETG.

Its subcellular location is the host cytoplasm. The protein localises to the host nucleus. It carries out the reaction ADP-D-ribose + H2O = D-ribose 5-phosphate + AMP + 2 H(+). In terms of biological role, plays an important role in virus replication most probably through its hydrolyzing ADP-ribose activity in host cells. May function in viral DNA replication or transcription directly, or by removing toxic substances or metabolic intermediates. This Lepidoptera (butterflies and moths) protein is Protein ADP-ribose pyrophosphatase ORF38.